The sequence spans 215 residues: Pre-hexon-linking protein VIII (215 aa).

At Thr-62 the chain carries Phosphothreonine; by host. A propeptide spanning residues 110–150 is cleaved from the precursor; the sequence is AWINYKNGSVRYEAPLQLAEEQVGGPLNAFAIKHQLQLAGG.

Belongs to the adenoviridae hexon-linking protein family. In terms of assembly, interacts with the peripentonal hexons as well as the hexons in the facets. Part of a complex composed of the core-capsid bridging protein, the endosome lysis protein VI and the hexon-linking protein VIII; these interactions bridge the virus core to the capsid. Post-translationally, cleaved by the viral protease during virion maturation. May cause the middle segment to be shed from the capsid.

Its subcellular location is the virion. The protein localises to the host nucleus. Functionally, structural component of the virion that acts as a cement protein on the capsid interior and which glue the peripentonal hexons and group-of-nine hexons together. The chain is Pre-hexon-linking protein VIII from Murine adenovirus A serotype 1 (MAdV-1).